Consider the following 355-residue polypeptide: uncharacterized protein (355 aa).

Position 58–65 (58–65) interacts with ATP; the sequence is GYIIFGIK.

This is an uncharacterized protein from Ureaplasma parvum serovar 3 (strain ATCC 700970).